A 730-amino-acid chain; its full sequence is MSNSNNNNNNKKLAISLKNVCRGYGNTKVIDNLNLQIKSGTINCLIGASGSGKTTILRTILGRLIPDSGEVLVFGKRPHDIGGVPGSICGFCPQEGALYYDLTLDHTLNFFSNVHQIPKDKFESKKNEIIKLLDLPQINSRSVGLLSGGQKKRVSLAVALLHSPKLLILDEPTVGIDMEVASNIWSYLRSLANSGVTIIITTHYINEAVGSDNVFLLRDGKILENGAPNYLIERYESQTLEEVFLKLCKRDNAQSIVDSKKNNNNSYFSSQEIIDVESHIVNNNNNNNNNNNNNNYNNNDDEENYNDDIYNDKKPLIGISKEDENNTNGSTNKESGILFRFYKVLLHSVAIGKRKFIQIIRNKVVLSFELLSPSVQVLLYFLAIGGSPKNLEFGVVNLDVGPIGSMYINSLSNTGIFNFHNYNSTTEAIEQIKSGNSFGLLDINAQFSEAILENFMNLSQYNPNGQIDLYMDFTNYQITLIVEQQLALSFETLAKQQANITMNPIKTVTPTVYGNPNSKFIDFLAPGMVCLISFAHAISITSVSFVKEKVDGSLDRLFAYGVRTSSIVFGHFLGHLPLLLVQITVLLLIAIYGFNVPIEGNIALVFLMTVSLAFVGMSLGLVISAVSRVETEAIQLSLGVYFPTLICSGTLWPLQSLPNWFVWFPNILPATHAGNAMRDIMLKGVGLHYKEVWVAFLVVLSWLIFLIFIAVLALNEKDKNLKLSCFKKRK.

Positions 15–244 (ISLKNVCRGY…YESQTLEEVF (230 aa)) constitute an ABC transporter domain. 47 to 54 (GASGSGKT) contributes to the ATP binding site. The segment at 281 to 303 (VNNNNNNNNNNNNNNYNNNDDEE) is disordered. Residues 282 to 298 (NNNNNNNNNNNNNNYNN) show a composition bias toward low complexity. The ABC transmembrane type-2 domain maps to 489–717 (SFETLAKQQA…FIAVLALNEK (229 aa)). Transmembrane regions (helical) follow at residues 520–540 (FIDF…AISI), 572–592 (FLGH…IAIY), 602–622 (IALV…LGLV), 634–654 (IQLS…LWPL), and 692–712 (VWVA…IAVL).

This sequence belongs to the ABC transporter superfamily.

It is found in the membrane. The chain is ABC transporter G family member 20 (abcG20) from Dictyostelium discoideum (Social amoeba).